Here is a 205-residue protein sequence, read N- to C-terminus: Thymidine kinase (205 aa).

ATP is bound by residues 9–16 (SAMNAGKS) and 87–90 (DECQ). The active-site Proton acceptor is Glu88. Positions 145, 147, 182, and 185 each coordinate Zn(2+).

Belongs to the thymidine kinase family. As to quaternary structure, homotetramer.

The protein localises to the cytoplasm. The catalysed reaction is thymidine + ATP = dTMP + ADP + H(+). This chain is Thymidine kinase, found in Shigella dysenteriae serotype 1 (strain Sd197).